The chain runs to 426 residues: Amino acid transporter AVT1H (426 aa).

The next 11 membrane-spanning stretches (helical) occupy residues 34–54 (SFLHSVINMVGMLIGLGQLSM), 55–75 (PYAVESGGWMSIFLLISFGIL), 110–130 (LIVCLFIYLEIFMALVSYTIS), 148–168 (HFPAAKLTAVAVAIALPSLWI), 182–202 (ILMSAIIFGSVVYTAIFGGVI), 215–235 (IPTVSGIYLFSFGGHIVFPNL), 248–268 (VSIVSFATVTALYGALAITGA), 292–312 (IALWATVLTPMTKYALEFAPL), 340–360 (LLLVILALALTVPYFGYVLSL), 363–383 (SLVSVTIAVTLPSAFYLKICW), and 392–412 (AANLGFVVLGCVLGVLGSFES).

The protein belongs to the amino acid/polyamine transporter 2 family. Amino acid/auxin permease (AAAP) (TC 2.A.18.5) subfamily.

The protein resides in the membrane. The sequence is that of Amino acid transporter AVT1H from Arabidopsis thaliana (Mouse-ear cress).